Here is an 81-residue protein sequence, read N- to C-terminus: Small ribosomal subunit protein bS16 (81 aa).

The protein belongs to the bacterial ribosomal protein bS16 family.

The polypeptide is Small ribosomal subunit protein bS16 (Colwellia psychrerythraea (strain 34H / ATCC BAA-681) (Vibrio psychroerythus)).